A 487-amino-acid polypeptide reads, in one-letter code: Betaine aldehyde dehydrogenase (487 aa).

K(+) is bound by residues isoleucine 27 and aspartate 93. An NAD(+)-binding site is contributed by 149 to 151; the sequence is GAW. Catalysis depends on lysine 161, which acts as the Charge relay system. NAD(+) contacts are provided by residues 175–178 and 228–231; these read KPSE and SVPT. Leucine 243 is a K(+) binding site. Glutamate 249 (proton acceptor) is an active-site residue. NAD(+)-binding residues include glycine 251, cysteine 283, and glutamate 384. Cysteine 283 (nucleophile) is an active-site residue. Cysteine 283 carries the post-translational modification Cysteine sulfenic acid (-SOH). Lysine 454 and glycine 457 together coordinate K(+). Glutamate 461 (charge relay system) is an active-site residue.

The protein belongs to the aldehyde dehydrogenase family. As to quaternary structure, dimer of dimers. Requires K(+) as cofactor.

The catalysed reaction is betaine aldehyde + NAD(+) + H2O = glycine betaine + NADH + 2 H(+). It functions in the pathway amine and polyamine biosynthesis; betaine biosynthesis via choline pathway; betaine from betaine aldehyde: step 1/1. Its function is as follows. Involved in the biosynthesis of the osmoprotectant glycine betaine. Catalyzes the irreversible oxidation of betaine aldehyde to the corresponding acid. The chain is Betaine aldehyde dehydrogenase from Brucella canis (strain ATCC 23365 / NCTC 10854 / RM-666).